Consider the following 89-residue polypeptide: Small ribosomal subunit protein uS15 (89 aa).

This sequence belongs to the universal ribosomal protein uS15 family. As to quaternary structure, part of the 30S ribosomal subunit. Forms a bridge to the 50S subunit in the 70S ribosome, contacting the 23S rRNA.

One of the primary rRNA binding proteins, it binds directly to 16S rRNA where it helps nucleate assembly of the platform of the 30S subunit by binding and bridging several RNA helices of the 16S rRNA. Its function is as follows. Forms an intersubunit bridge (bridge B4) with the 23S rRNA of the 50S subunit in the ribosome. The polypeptide is Small ribosomal subunit protein uS15 (Shewanella sediminis (strain HAW-EB3)).